Consider the following 142-residue polypeptide: Large ribosomal subunit protein uL13 (142 aa).

Belongs to the universal ribosomal protein uL13 family. As to quaternary structure, part of the 50S ribosomal subunit.

In terms of biological role, this protein is one of the early assembly proteins of the 50S ribosomal subunit, although it is not seen to bind rRNA by itself. It is important during the early stages of 50S assembly. In Shewanella putrefaciens (strain CN-32 / ATCC BAA-453), this protein is Large ribosomal subunit protein uL13.